The primary structure comprises 471 residues: V-type ATP synthase beta chain (471 aa).

The protein belongs to the ATPase alpha/beta chains family.

Functionally, produces ATP from ADP in the presence of a proton gradient across the membrane. The V-type beta chain is a regulatory subunit. This chain is V-type ATP synthase beta chain (atpB), found in Deinococcus radiodurans (strain ATCC 13939 / DSM 20539 / JCM 16871 / CCUG 27074 / LMG 4051 / NBRC 15346 / NCIMB 9279 / VKM B-1422 / R1).